The primary structure comprises 513 residues: Probable DNA ligase (513 aa).

Residue Glu-215 coordinates ATP. Catalysis depends on Lys-217, which acts as the N6-AMP-lysine intermediate. ATP-binding residues include Arg-222, Arg-237, Glu-266, Phe-306, Arg-378, and Lys-384.

This sequence belongs to the ATP-dependent DNA ligase family. The cofactor is Mg(2+).

The enzyme catalyses ATP + (deoxyribonucleotide)n-3'-hydroxyl + 5'-phospho-(deoxyribonucleotide)m = (deoxyribonucleotide)n+m + AMP + diphosphate.. DNA ligase that seals nicks in double-stranded DNA during DNA replication, DNA recombination and DNA repair. In Mycobacterium marinum (strain ATCC BAA-535 / M), this protein is Probable DNA ligase.